The sequence spans 430 residues: Glutamyl-tRNA reductase (430 aa).

Residues 49–52 (TCNR), S109, 114–116 (EGQ), and Q120 contribute to the substrate site. The active-site Nucleophile is C50. 189–194 (GAGKMA) is an NADP(+) binding site.

This sequence belongs to the glutamyl-tRNA reductase family. In terms of assembly, homodimer.

The enzyme catalyses (S)-4-amino-5-oxopentanoate + tRNA(Glu) + NADP(+) = L-glutamyl-tRNA(Glu) + NADPH + H(+). The protein operates within porphyrin-containing compound metabolism; protoporphyrin-IX biosynthesis; 5-aminolevulinate from L-glutamyl-tRNA(Glu): step 1/2. It participates in porphyrin-containing compound metabolism; chlorophyll biosynthesis. Catalyzes the NADPH-dependent reduction of glutamyl-tRNA(Glu) to glutamate 1-semialdehyde (GSA). This chain is Glutamyl-tRNA reductase, found in Crocosphaera subtropica (strain ATCC 51142 / BH68) (Cyanothece sp. (strain ATCC 51142)).